The following is a 542-amino-acid chain: uncharacterized protein (542 aa).

Residues 256 to 275 (KKSTTTSSPPITTTHLSKPE) are disordered. The segment covering 258–269 (STTTSSPPITTT) has biased composition (low complexity).

This is an uncharacterized protein from Caenorhabditis elegans.